The following is a 128-amino-acid chain: Ribonuclease P protein component (128 aa).

This sequence belongs to the RnpA family. As to quaternary structure, consists of a catalytic RNA component (M1 or rnpB) and a protein subunit.

It carries out the reaction Endonucleolytic cleavage of RNA, removing 5'-extranucleotides from tRNA precursor.. RNaseP catalyzes the removal of the 5'-leader sequence from pre-tRNA to produce the mature 5'-terminus. It can also cleave other RNA substrates such as 4.5S RNA. The protein component plays an auxiliary but essential role in vivo by binding to the 5'-leader sequence and broadening the substrate specificity of the ribozyme. This chain is Ribonuclease P protein component, found in Mycoplasma genitalium (strain ATCC 33530 / DSM 19775 / NCTC 10195 / G37) (Mycoplasmoides genitalium).